The chain runs to 281 residues: Sulfur carrier protein FdhD (281 aa).

Residue C117 is the Cysteine persulfide intermediate of the active site.

The protein belongs to the FdhD family.

It is found in the cytoplasm. Functionally, required for formate dehydrogenase (FDH) activity. Acts as a sulfur carrier protein that transfers sulfur from IscS to the molybdenum cofactor prior to its insertion into FDH. The protein is Sulfur carrier protein FdhD of Xanthomonas euvesicatoria pv. vesicatoria (strain 85-10) (Xanthomonas campestris pv. vesicatoria).